The primary structure comprises 355 residues: 4-dimethylallyltryptophan N-methyltransferase easF (355 aa).

Belongs to the methyltransferase superfamily. Homodimer.

It catalyses the reaction 4-(3-methylbut-2-enyl)-L-tryptophan + S-adenosyl-L-methionine = 4-(3-methylbut-2-enyl)-L-abrine + S-adenosyl-L-homocysteine + H(+). It participates in alkaloid biosynthesis; ergot alkaloid biosynthesis. Its function is as follows. 4-dimethylallyltryptophan N-methyltransferase; part of the gene cluster that mediates the biosynthesis of fungal ergot alkaloid. DmaW catalyzes the first step of ergot alkaloid biosynthesis by condensing dimethylallyl diphosphate (DMAP) and tryptophan to form 4-dimethylallyl-L-tryptophan. The second step is catalyzed by the methyltransferase easF that methylates 4-dimethylallyl-L-tryptophan in the presence of S-adenosyl-L-methionine, resulting in the formation of 4-dimethylallyl-L-abrine. The catalase easC and the FAD-dependent oxidoreductase easE then transform 4-dimethylallyl-L-abrine to chanoclavine-I which is further oxidized by easD in the presence of NAD(+), resulting in the formation of chanoclavine-I aldehyde. Agroclavine dehydrogenase easG then mediates the conversion of chanoclavine-I aldehyde to agroclavine via a non-enzymatic adduct reaction: the substrate is an iminium intermediate that is formed spontaneously from chanoclavine-I aldehyde in the presence of glutathione. Further conversion of agroclavine to paspalic acid is a two-step process involving oxidation of agroclavine to elymoclavine and of elymoclavine to paspalic acid, the second step being performed by the elymoclavine oxidase cloA. However, cloA does not encode a functional enzyme indicating that C.fusiformis terminates its ergot alkaloid pathway at elymoclavine. The sequence is that of 4-dimethylallyltryptophan N-methyltransferase easF from Claviceps fusiformis (Ergot fungus).